A 620-amino-acid chain; its full sequence is Proline--tRNA ligase (620 aa).

It belongs to the class-II aminoacyl-tRNA synthetase family. ProS type 1 subfamily. As to quaternary structure, homodimer.

The protein localises to the cytoplasm. It carries out the reaction tRNA(Pro) + L-proline + ATP = L-prolyl-tRNA(Pro) + AMP + diphosphate. In terms of biological role, catalyzes the attachment of proline to tRNA(Pro) in a two-step reaction: proline is first activated by ATP to form Pro-AMP and then transferred to the acceptor end of tRNA(Pro). As ProRS can inadvertently accommodate and process non-cognate amino acids such as alanine and cysteine, to avoid such errors it has two additional distinct editing activities against alanine. One activity is designated as 'pretransfer' editing and involves the tRNA(Pro)-independent hydrolysis of activated Ala-AMP. The other activity is designated 'posttransfer' editing and involves deacylation of mischarged Ala-tRNA(Pro). The misacylated Cys-tRNA(Pro) is not edited by ProRS. The sequence is that of Proline--tRNA ligase from Streptococcus suis (strain 98HAH33).